Reading from the N-terminus, the 303-residue chain is MKITVLGCGALGQLWLSALCKHGHDVQGWLRVPQPYCSVNLIDTDGSFFNESLTANDPDFLAKSELLLVTLKAWQVSDAVRTLASTLPVTSPILLIHNGMGTIEELQNIQQPMLMGTITHAARRDGNIIIHVANGTTHIGPAREQDGDYSYLADILQGVLPDVAWHNNIRAEMWRKLAVNCVINPLTALWNCPNGELRHHTDEINAICEEVAAVIEREGYHTSADDLRYYVEQVIDSTAENISSMLQDVRAMRHTEIDYITGYLLKRARVHGLAVPENSRLFEMVKRKESEYERSGTGMPRPW.

Residues 7 to 12, Asn98, and Ala122 each bind NADP(+); that span reads GCGALG. Asn98 provides a ligand contact to substrate. The active-site Proton donor is Lys176. Substrate is bound by residues Asn180, Asn184, Asn194, and Ser244. Glu256 contributes to the NADP(+) binding site.

The protein belongs to the ketopantoate reductase family. As to quaternary structure, monomer.

It is found in the cytoplasm. It carries out the reaction (R)-pantoate + NADP(+) = 2-dehydropantoate + NADPH + H(+). It participates in cofactor biosynthesis; (R)-pantothenate biosynthesis; (R)-pantoate from 3-methyl-2-oxobutanoate: step 2/2. In terms of biological role, catalyzes the NADPH-dependent reduction of ketopantoate into pantoic acid. Has a strong preference for NADPH over NADH as the electron acceptor. Pantoate, ketoisovalerate, oxaloacetate, pyruvate, 3-hydroxypyruvate, alpha-ketoglutarate, alpha-ketobutyrate, and acetaldehyde cannot serve as substrates for reduction. This Salmonella typhimurium (strain LT2 / SGSC1412 / ATCC 700720) protein is 2-dehydropantoate 2-reductase.